The following is a 105-amino-acid chain: Thioredoxin (105 aa).

One can recognise a Thioredoxin domain in the interval 1-105 (MASNVTDKSF…SLIEWINNNI (105 aa)). Cys30 and Cys33 are joined by a disulfide.

It belongs to the thioredoxin family.

Component of the thioredoxin-thioredoxin reductase system. Participates in various redox reactions through the reversible oxidation of its active center dithiol to a disulfide and catalyzes dithiol-disulfide exchange reactions. This is Thioredoxin (trxA) from Rickettsia bellii (strain RML369-C).